Here is a 152-residue protein sequence, read N- to C-terminus: Large ribosomal subunit protein bL9 (152 aa).

This sequence belongs to the bacterial ribosomal protein bL9 family.

In terms of biological role, binds to the 23S rRNA. The sequence is that of Large ribosomal subunit protein bL9 from Coxiella burnetii (strain RSA 331 / Henzerling II).